Consider the following 476-residue polypeptide: Protein transport protein Sec61 subunit alpha isoform 2 (476 aa).

Residues 1 to 32 (MGIKFLEVIKPFCAVLPEIQKPERKIQFREKV) lie on the Cytoplasmic side of the membrane. A helical transmembrane segment spans residues 33–53 (LWTAITLFIFLVCCQIPLFGI). The Lumenal segment spans residues 54–75 (MSSDSADPFYWMRVILASNRGT). The helical transmembrane segment at 76–96 (LMELGISPIVTSGLIMQLLAG) threads the bilayer. Residues 97–117 (AKIIEVGDTPKDRALFNGAQK) lie on the Cytoplasmic side of the membrane. The helical transmembrane segment at 118–138 (LFGMIITIGQAIVYVMTGMYG) threads the bilayer. The Lumenal portion of the chain corresponds to 139–144 (DPAEMG). A helical transmembrane segment spans residues 145–165 (AGICLLIIIQLFVAGLIVLLL). At 166-172 (DELLQKG) the chain is on the cytoplasmic side. A helical transmembrane segment spans residues 173–193 (YGLGSGISLFIATNICETIVW). Over 194–240 (KASSPTTINTGRGTEFEGAVIALFHLLATRTDKVRALREAFYRQNLP) the chain is Lumenal. Residues 241–261 (NLMNLIATVFVFAVVIYFQGF) traverse the membrane as a helical segment. Over 262–288 (RVDLPIKSARYRGQYSSYPIKLFYTSN) the chain is Cytoplasmic. Residues 289-309 (IPIILQSALVSNLYVISQMLS) traverse the membrane as a helical segment. Topologically, residues 310–353 (VRFSGNFLVNLLGQWADVSGGGPARSYPVGGLCYYLSPPESMGA) are lumenal. The chain crosses the membrane as a helical span at residues 354–374 (ILEDPVHVVVYIIFMLGSCAF). Over 375–420 (FSKTWIEVSGSSAKDVAKQLKEQQMVMRGHRDTSMVHELNRYIPTA) the chain is Cytoplasmic. Helical transmembrane passes span 421 to 441 (AAFG…LGAI) and 442 to 462 (GSGT…EIFV). The Cytoplasmic segment spans residues 463-476 (KEQAEVGGMGALFF).

The protein belongs to the SecY/SEC61-alpha family. As to quaternary structure, the SEC61 channel-forming translocon complex consists of channel-forming core components SEC61A1, SEC61B and SEC61G and different auxiliary components such as SEC62 and SEC63.

The protein localises to the endoplasmic reticulum membrane. Its function is as follows. Component of SEC61 channel-forming translocon complex that mediates transport of signal peptide-containing precursor polypeptides across the endoplasmic reticulum (ER). Forms a ribosome receptor and a gated pore in the ER membrane, both functions required for cotranslational translocation of nascent polypeptides. In Pongo abelii (Sumatran orangutan), this protein is Protein transport protein Sec61 subunit alpha isoform 2 (SEC61A2).